The following is a 264-amino-acid chain: S-adenosylmethionine decarboxylase proenzyme (264 aa).

Catalysis depends on Ser-113, which acts as the Schiff-base intermediate with substrate; via pyruvic acid. Position 113 is a pyruvic acid (Ser); by autocatalysis (Ser-113). His-118 (proton acceptor; for processing activity) is an active-site residue. Cys-141 functions as the Proton donor; for catalytic activity in the catalytic mechanism.

It belongs to the prokaryotic AdoMetDC family. Type 2 subfamily. As to quaternary structure, heterooctamer of four alpha and four beta chains arranged as a tetramer of alpha/beta heterodimers. Requires pyruvate as cofactor. Is synthesized initially as an inactive proenzyme. Formation of the active enzyme involves a self-maturation process in which the active site pyruvoyl group is generated from an internal serine residue via an autocatalytic post-translational modification. Two non-identical subunits are generated from the proenzyme in this reaction, and the pyruvate is formed at the N-terminus of the alpha chain, which is derived from the carboxyl end of the proenzyme. The post-translation cleavage follows an unusual pathway, termed non-hydrolytic serinolysis, in which the side chain hydroxyl group of the serine supplies its oxygen atom to form the C-terminus of the beta chain, while the remainder of the serine residue undergoes an oxidative deamination to produce ammonia and the pyruvoyl group blocking the N-terminus of the alpha chain.

The catalysed reaction is S-adenosyl-L-methionine + H(+) = S-adenosyl 3-(methylsulfanyl)propylamine + CO2. Its pathway is amine and polyamine biosynthesis; S-adenosylmethioninamine biosynthesis; S-adenosylmethioninamine from S-adenosyl-L-methionine: step 1/1. Functionally, catalyzes the decarboxylation of S-adenosylmethionine to S-adenosylmethioninamine (dcAdoMet), the propylamine donor required for the synthesis of the polyamines spermine and spermidine from the diamine putrescine. This is S-adenosylmethionine decarboxylase proenzyme from Pseudomonas aeruginosa (strain ATCC 15692 / DSM 22644 / CIP 104116 / JCM 14847 / LMG 12228 / 1C / PRS 101 / PAO1).